Here is a 214-residue protein sequence, read N- to C-terminus: MTIGIVGRKSGMTRIFTDDGLSVPVTVIEVDPNRITQVKSVETDGYAAVQVTVGSRRASRVTKAEAGHFAKAQTEAGRGVWELRNEAGEAFEVGGQLTVEAFEAGQKVDVTGTSKGKGFAGTVKRWNFRTQDATHGNSLSHRAPGSIGQCQTPGRVMKGKKMSGHMGAERVTTQNLEVVRVDVERNLLLIKGAVPGAPGGDVFIRPAVKLRNNG.

The interval 134 to 161 (THGNSLSHRAPGSIGQCQTPGRVMKGKK) is disordered. N5-methylglutamine is present on Gln151.

Belongs to the universal ribosomal protein uL3 family. Part of the 50S ribosomal subunit. Forms a cluster with proteins L14 and L19. Methylated by PrmB.

Its function is as follows. One of the primary rRNA binding proteins, it binds directly near the 3'-end of the 23S rRNA, where it nucleates assembly of the 50S subunit. In Teredinibacter turnerae (strain ATCC 39867 / T7901), this protein is Large ribosomal subunit protein uL3.